Consider the following 603-residue polypeptide: Serine/threonine-protein kinase PLK1 (603 aa).

Low complexity predominate over residues 1 to 15; that stretch reads MNAAAKAGKLARAPA. The segment at 1 to 32 is disordered; the sequence is MNAAAKAGKLARAPADLGKGGVPGDAAPGAPG. Lysine 19 is covalently cross-linked (Glycyl lysine isopeptide (Lys-Gly) (interchain with G-Cter in ubiquitin)). The 253-residue stretch at 53–305 folds into the Protein kinase domain; that stretch reads YVRGRFLGKG…IHELLNDEFF (253 aa). ATP is bound by residues 59–67 and lysine 82; that span reads LGKGGFAKC. Phosphoserine is present on serine 103. Residue glutamate 131 participates in ATP binding. Serine 137 is subject to Phosphoserine. Catalysis depends on aspartate 176, which acts as the Proton acceptor. Residues 178–181 and aspartate 194 each bind ATP; that span reads KLGN. An activation loop region spans residues 194–221; the sequence is DFGLATKVEYEGERKKTLCGTPNYIAPE. Position 210 is a phosphothreonine; by AURKA (threonine 210). The residue at position 214 (threonine 214) is a Phosphothreonine. Phosphoserine; by autocatalysis is present on residues serine 269 and serine 335. Positions 337-340 match the D-box that targets the protein for proteasomal degradation in anaphase motif; sequence RKPL. Lysine 338 participates in a covalent cross-link: Glycyl lysine isopeptide (Lys-Gly) (interchain with G-Cter in SUMO2). Residues 338–361 form a disordered region; it reads KPLTVLNKGVENPLPDRPREKEEP. Over residues 351–361 the composition is skewed to basic and acidic residues; it reads LPDRPREKEEP. Phosphoserine occurs at positions 375 and 450. A POLO box 1 domain is found at 410-488; the sequence is WVSKWVDYSD…LNYFRNYMSE (79 aa). Residue lysine 492 forms a Glycyl lysine isopeptide (Lys-Gly) (interchain with G-Cter in ubiquitin) linkage. Residues 493–507 are linker; that stretch reads AGANITPREGDELAR. At threonine 498 the chain carries Phosphothreonine. Positions 510 to 592 constitute a POLO box 2 domain; sequence YLRTWFRTRS…ARTMVDKLLS (83 aa). The interval 538-540 is important for interaction with phosphorylated proteins; sequence HTK.

This sequence belongs to the protein kinase superfamily. Ser/Thr protein kinase family. CDC5/Polo subfamily. As to quaternary structure, interacts with CEP170 and EVI5. Interacts and phosphorylates ERCC6L. Interacts with FAM29A. Interacts with SLX4/BTBD12 and TTDN1. Interacts with BUB1B. Interacts (via POLO-box domain) with the phosphorylated form of BUB1, CENPU and CDC25C. Interacts with isoform 3 of SGO1. Interacts with BORA, KIF2A and AURKA. Interacts with TOPORS and CYLD. Interacts with ECT2; the interaction is stimulated upon phosphorylation of ECT2 on 'Thr-444'. Interacts with PRC1. Interacts with KIF20A/MKLP2 (when phosphorylated), leading to the recruitment at the central spindle. Interacts (via POLO box domains) with PPP1R12A/MYPT1 (when previously phosphorylated by CDK1). Part of an astrin (SPAG5)-kinastrin (SKAP) complex containing KNSTRN, SPAG5, PLK1, DYNLL1 and SGO2. Interacts with BIRC6/bruce. Interacts with CDK1-phosphorylated FRY; this interaction occurs in mitotic cells, but not in interphase cells. FRY interaction facilitates AURKA-mediated PLK1 phosphorylation. Interacts with CDK1-phosphorylated DCTN6 during mitotic prometaphase; the interaction facilitates recruitment to kinetochores. Interacts with CEP68; the interaction phosphorylates CEP68. Interacts (via POLO-box domain) with DCTN1. Interacts with CEP20 in later G1, S, G2 and M phases of the cell cycle; this interaction recruits PLK1 to centrosomes, a step required for S phase progression. Interacts with HSF1; this interaction increases upon heat shock but does not modulate neither HSF1 homotrimerization nor DNA-binding activities. Interacts with HNRNPU; this interaction induces phosphorylation of HNRNPU in mitosis. Interacts (via its N-terminus) with RIOK2. Interacts with KLHL22. Interacts (via POLO box domains) with NEDD9/HEF1 (via C-terminus). Interacts (via RVxF motif) with FIRRM; regulates PLK1 kinase activity. Interacts with SKA3; the interaction promotes the stability of PLK1. Interacts with the MTMR3:MTMR4 heterooligomer; brings CEP55 and PLK1 together during early mitosis, regulating the phosphorylation of CEP55 by PLK1 and its recruitment to the midbody where it can mediate cell abscission. Post-translationally, catalytic activity is enhanced by phosphorylation of Thr-210. Phosphorylation at Thr-210 is first detected on centrosomes in the G2 phase of the cell cycle, peaks in prometaphase and gradually disappears from centrosomes during anaphase. Dephosphorylation at Thr-210 at centrosomes is probably mediated by protein phosphatase 1C (PP1C), via interaction with PPP1R12A/MYPT1. Autophosphorylation and phosphorylation of Ser-137 may not be significant for the activation of PLK1 during mitosis, but may enhance catalytic activity during recovery after DNA damage checkpoint. Phosphorylated in vitro by STK10. In terms of processing, ubiquitinated by the anaphase promoting complex/cyclosome (APC/C) in anaphase and following DNA damage, leading to its degradation by the proteasome. Ubiquitination is mediated via its interaction with FZR1/CDH1. Ubiquitination and subsequent degradation prevents entry into mitosis and is essential to maintain an efficient G2 DNA damage checkpoint. Monoubiquitination at Lys-492 by the BCR(KLHL22) ubiquitin ligase complex does not lead to degradation: it promotes PLK1 dissociation from phosphoreceptor proteins and subsequent removal from kinetochores, allowing silencing of the spindle assembly checkpoint (SAC) and chromosome segregation.

It localises to the nucleus. The protein resides in the chromosome. It is found in the centromere. Its subcellular location is the kinetochore. The protein localises to the cytoplasm. It localises to the cytoskeleton. The protein resides in the microtubule organizing center. It is found in the centrosome. Its subcellular location is the spindle. The protein localises to the midbody. The catalysed reaction is L-seryl-[protein] + ATP = O-phospho-L-seryl-[protein] + ADP + H(+). The enzyme catalyses L-threonyl-[protein] + ATP = O-phospho-L-threonyl-[protein] + ADP + H(+). With respect to regulation, activated by phosphorylation of Thr-210 by AURKA; phosphorylation by AURKA is enhanced by BORA. Once activated, activity is stimulated by binding target proteins. Binding of target proteins has no effect on the non-activated kinase. Several inhibitors targeting PLKs are currently in development and are under investigation in a growing number of clinical trials, such as BI 2536, an ATP-competitive PLK1 inhibitor or BI 6727, a dihydropteridinone that specifically inhibits the catalytic activity of PLK1. Functionally, serine/threonine-protein kinase that performs several important functions throughout M phase of the cell cycle, including the regulation of centrosome maturation and spindle assembly, the removal of cohesins from chromosome arms, the inactivation of anaphase-promoting complex/cyclosome (APC/C) inhibitors, and the regulation of mitotic exit and cytokinesis. Polo-like kinase proteins act by binding and phosphorylating proteins that are already phosphorylated on a specific motif recognized by the POLO box domains. Phosphorylates BORA, BUB1B/BUBR1, CCNB1, CDC25C, CEP55, ECT2, ERCC6L, FBXO5/EMI1, FOXM1, KIF20A/MKLP2, CENPU, NEDD1, NINL, NPM1, NUDC, PKMYT1/MYT1, KIZ, PPP1R12A/MYPT1, PRC1, RACGAP1/CYK4, RHNO1, SGO1, STAG2/SA2, TEX14, TOPORS, p73/TP73, TPT1, WEE1 and HNRNPU. Plays a key role in centrosome functions and the assembly of bipolar spindles by phosphorylating KIZ, NEDD1 and NINL. NEDD1 phosphorylation promotes subsequent targeting of the gamma-tubulin ring complex (gTuRC) to the centrosome, an important step for spindle formation. Phosphorylation of NINL component of the centrosome leads to NINL dissociation from other centrosomal proteins. Involved in mitosis exit and cytokinesis by phosphorylating CEP55, ECT2, KIF20A/MKLP2, CENPU, PRC1 and RACGAP1. Recruited at the central spindle by phosphorylating and docking PRC1 and KIF20A/MKLP2; creates its own docking sites on PRC1 and KIF20A/MKLP2 by mediating phosphorylation of sites subsequently recognized by the POLO box domains. Phosphorylates RACGAP1, thereby creating a docking site for the Rho GTP exchange factor ECT2 that is essential for the cleavage furrow formation. Promotes the central spindle recruitment of ECT2. Plays a central role in G2/M transition of mitotic cell cycle by phosphorylating CCNB1, CDC25C, FOXM1, CENPU, PKMYT1/MYT1, PPP1R12A/MYPT1 and WEE1. Part of a regulatory circuit that promotes the activation of CDK1 by phosphorylating the positive regulator CDC25C and inhibiting the negative regulators WEE1 and PKMYT1/MYT1. Also acts by mediating phosphorylation of cyclin-B1 (CCNB1) on centrosomes in prophase. Phosphorylates FOXM1, a key mitotic transcription regulator, leading to enhance FOXM1 transcriptional activity. Involved in kinetochore functions and sister chromatid cohesion by phosphorylating BUB1B/BUBR1, FBXO5/EMI1 and STAG2/SA2. PLK1 is high on non-attached kinetochores suggesting a role of PLK1 in kinetochore attachment or in spindle assembly checkpoint (SAC) regulation. Required for kinetochore localization of BUB1B. Regulates the dissociation of cohesin from chromosomes by phosphorylating cohesin subunits such as STAG2/SA2. Phosphorylates SGO1: required for spindle pole localization of isoform 3 of SGO1 and plays a role in regulating its centriole cohesion function. Mediates phosphorylation of FBXO5/EMI1, a negative regulator of the APC/C complex during prophase, leading to FBXO5/EMI1 ubiquitination and degradation by the proteasome. Acts as a negative regulator of p53 family members: phosphorylates TOPORS, leading to inhibit the sumoylation of p53/TP53 and simultaneously enhance the ubiquitination and subsequent degradation of p53/TP53. Phosphorylates the transactivation domain of the transcription factor p73/TP73, leading to inhibit p73/TP73-mediated transcriptional activation and pro-apoptotic functions. Phosphorylates BORA, and thereby promotes the degradation of BORA. Contributes to the regulation of AURKA function. Also required for recovery after DNA damage checkpoint and entry into mitosis. Phosphorylates MISP, leading to stabilization of cortical and astral microtubule attachments required for proper spindle positioning. Together with MEIKIN, acts as a regulator of kinetochore function during meiosis I: required both for mono-orientation of kinetochores on sister chromosomes and protection of centromeric cohesin from separase-mediated cleavage. Phosphorylates CEP68 and is required for its degradation. Regulates nuclear envelope breakdown during prophase by phosphorylating DCTN1 resulting in its localization in the nuclear envelope. Phosphorylates the heat shock transcription factor HSF1, promoting HSF1 nuclear translocation upon heat shock. Phosphorylates HSF1 also in the early mitotic period; this phosphorylation regulates HSF1 localization to the spindle pole, the recruitment of the SCF(BTRC) ubiquitin ligase complex induicing HSF1 degradation, and hence mitotic progression. Regulates mitotic progression by phosphorylating RIOK2. Through the phosphorylation of DZIP1 regulates the localization during mitosis of the BBSome, a ciliary protein complex involved in cilium biogenesis. Regulates DNA repair during mitosis by mediating phosphorylation of POLQ and RHNO1, thereby promoting POLQ recruitment to DNA damage sites. Phosphorylates ATXN10 which may play a role in the regulation of cytokinesis and may stimulate the proteasome-mediated degradation of ATXN10. This chain is Serine/threonine-protein kinase PLK1 (Plk1), found in Rattus norvegicus (Rat).